Reading from the N-terminus, the 389-residue chain is Basigin (389 aa).

Residues M1–A21 form the signal peptide. The Extracellular segment spans residues A22–R325. The 84-residue stretch at G37–T120 folds into the Ig-like domain. 3 disulfide bridges follow: C44–C108, C157–C203, and C242–C305. The Ig-like C2-type domain maps to E138–G219. N160, N270, and N306 each carry an N-linked (GlcNAc...) asparagine glycan. Residues P221–S319 enclose the Ig-like V-type domain. A helical membrane pass occupies residues M326–Y349. Residues E350–T389 lie on the Cytoplasmic side of the membrane. Residues D356–T389 form a disordered region. T358 is modified (phosphothreonine). S372 bears the Phosphoserine mark.

Interacts with NXNL1. Interacts with SLC2A1 and SLC16A1/GLUT1. Interacts with XKR8; promoting its localization at the cell membrane. In terms of assembly, interacts with ATP1B2, MAG and L1CAM. Interacts with SLC16A7. Interacts with VEGFA, KDR/VEGFR2, PPIA/CYPA, SLC1A3, SLC16A11 and SLC16A12. Interacts with PPIL2; regulates BSG transport to the cell membrane. Interacts with SLC16A1; interaction mediates SLC16A1 targeting to the plasma membrane. Interacts with SLC16A3; interaction mediates SLC16A3 targeting to the plasma membrane. As to quaternary structure, interacts with SLC16A6; this interaction mediates targeting to the plasma membrane. In terms of processing, N-glycosylated. Post-translationally, N-glycosylated. During spermatogenesis, probably deglycosylated during epididymal transit. Retina-specific. Expressed in both rods and cones (at protein level). As to expression, testis and caput, corpus and cauda epididymides (at protein level). Expressed in the brain, lung, liver, kidney, heart, spleen, uterus, retina and skeletal muscle.

The protein resides in the cell membrane. It localises to the photoreceptor inner segment. Its subcellular location is the cell projection. The protein localises to the cilium. It is found in the photoreceptor outer segment. The protein resides in the endoplasmic reticulum membrane. It localises to the basolateral cell membrane. Its function is as follows. Essential for normal retinal maturation and development. Acts as a retinal cell surface receptor for NXNL1 and plays an important role in NXNL1-mediated survival of retinal cone photoreceptors. In association with glucose transporter SLC16A1/GLUT1 and NXNL1, promotes retinal cone survival by enhancing aerobic glycolysis and accelerating the entry of glucose into photoreceptors. In terms of biological role, signaling receptor for cyclophilins, essential for PPIA/CYPA and PPIB/CYPB-dependent signaling related to chemotaxis and adhesion of immune cells. Plays an important role in targeting the monocarboxylate transporters SLC16A1, SLC16A3 and SLC16A8 to the plasma membrane. Acts as a coreceptor for vascular endothelial growth factor receptor 2 (KDR/VEGFR2) in endothelial cells enhancing its VEGFA-mediated activation and downstream signaling. Promotes angiogenesis through EPAS1/HIF2A-mediated up-regulation of VEGFA and KDR/VEGFR2 in endothelial cells. Plays an important role in spermatogenesis; mediates interactions between germ cells and Sertoli cell and is essential for the development/differentiation of germ cells to round spermatids. In Mus musculus (Mouse), this protein is Basigin (Bsg).